The chain runs to 330 residues: Src kinase-associated phosphoprotein 2-B (330 aa).

The tract at residues 57–84 (DKAEDDDQEENDGFPLPPDAVSLASDRD) is disordered. Residues 59–68 (AEDDDQEEND) show a composition bias toward acidic residues. The PH domain maps to 105-208 (EYLKAGYLEK…WINAIMNSRG (104 aa)). The segment at 236–261 (ELPEESEKPVTETETQKATPVPVNNT) is disordered. The span at 240 to 250 (ESEKPVTETET) shows a compositional bias: basic and acidic residues. Polar residues predominate over residues 251–261 (QKATPVPVNNT). Positions 268–329 (DYANFYRGLW…PKAYIIEMYD (62 aa)) constitute an SH3 domain.

The protein belongs to the SKAP family. In terms of processing, phosphorylated on tyrosines.

The protein resides in the cytoplasm. In terms of biological role, may be involved in B-cell and macrophage adhesion processes. May play a role in src signaling pathway. This chain is Src kinase-associated phosphoprotein 2-B (skap2-b), found in Xenopus laevis (African clawed frog).